The sequence spans 333 residues: 4-hydroxyproline 2-epimerase (333 aa).

C90 functions as the Proton acceptor in the catalytic mechanism. Residues G91–H92, H223, and D249 each bind substrate. C253 (proton donor) is an active-site residue. Substrate is bound at residue G254 to T255.

Belongs to the proline racemase family.

It catalyses the reaction trans-4-hydroxy-L-proline = cis-4-hydroxy-D-proline. Its function is as follows. Catalyzes the epimerization of trans-4-hydroxy-L-proline (t4LHyp) to cis-4-hydroxy-D-proline (c4DHyp). May be involved in a degradation pathway of t4LHyp, which would allow S.novella to grow on t4LHyp as a sole carbon source. This is 4-hydroxyproline 2-epimerase from Ancylobacter novellus (strain ATCC 8093 / DSM 506 / JCM 20403 / CCM 1077 / IAM 12100 / NBRC 12443 / NCIMB 10456) (Starkeya novella).